Consider the following 337-residue polypeptide: tRNA N6-adenosine threonylcarbamoyltransferase (337 aa).

Fe cation is bound by residues His111 and His115. Substrate-binding positions include 134 to 138 (LVSGG), Asp167, Gly180, and Asn272. A Fe cation-binding site is contributed by Asp300.

The protein belongs to the KAE1 / TsaD family. Requires Fe(2+) as cofactor.

The protein resides in the cytoplasm. It carries out the reaction L-threonylcarbamoyladenylate + adenosine(37) in tRNA = N(6)-L-threonylcarbamoyladenosine(37) in tRNA + AMP + H(+). In terms of biological role, required for the formation of a threonylcarbamoyl group on adenosine at position 37 (t(6)A37) in tRNAs that read codons beginning with adenine. Is involved in the transfer of the threonylcarbamoyl moiety of threonylcarbamoyl-AMP (TC-AMP) to the N6 group of A37, together with TsaE and TsaB. TsaD likely plays a direct catalytic role in this reaction. The protein is tRNA N6-adenosine threonylcarbamoyltransferase of Salmonella agona (strain SL483).